A 189-amino-acid polypeptide reads, in one-letter code: Molybdopterin synthase catalytic subunit (189 aa).

Ser-20 carries the post-translational modification Phosphoserine. Residues 143–144 (HR), Lys-159, and 166–168 (KKE) each bind substrate.

The protein belongs to the MoaE family. MOCS2B subfamily. In terms of assembly, heterotetramer; composed of 2 small (MOCS2A) and 2 large (MOCS2B) subunits.

The protein localises to the cytoplasm. Its subcellular location is the cytosol. The catalysed reaction is 2 [molybdopterin-synthase sulfur-carrier protein]-C-terminal-Gly-aminoethanethioate + cyclic pyranopterin phosphate + H2O = molybdopterin + 2 [molybdopterin-synthase sulfur-carrier protein]-C-terminal Gly-Gly + 2 H(+). The protein operates within cofactor biosynthesis; molybdopterin biosynthesis. Its function is as follows. Catalytic subunit of the molybdopterin synthase complex, a complex that catalyzes the conversion of precursor Z into molybdopterin. Acts by mediating the incorporation of 2 sulfur atoms from thiocarboxylated MOCS2A into precursor Z to generate a dithiolene group. This chain is Molybdopterin synthase catalytic subunit, found in Bos taurus (Bovine).